Here is a 110-residue protein sequence, read N- to C-terminus: Cation efflux system protein CusF (110 aa).

The first 21 residues, 1-21 (MKKALQVAMFSLFTVIGFNAQ), serve as a signal peptide directing secretion.

The cus efflux system is composed of CusA, CusB, CusC and CusF. Interacts with copper-exporting P-type ATPase CopA; when this protein is precharged with copper it binds very little CopA.

The protein localises to the periplasm. In terms of biological role, part of a cation efflux system that mediates resistance to copper and silver. Binds one copper per polypeptide. The polypeptide is Cation efflux system protein CusF (cusF) (Escherichia coli (strain K12)).